The following is a 714-amino-acid chain: Fatty acid oxidation complex subunit alpha (714 aa).

An enoyl-CoA hydratase region spans residues 1-190 (MEMTSAFTLN…KLGLVDDVVP (190 aa)). A 3-hydroxyacyl-CoA dehydrogenase region spans residues 306–714 (APLNSVGILG…FWKTTATDLQ (409 aa)).

The protein in the N-terminal section; belongs to the enoyl-CoA hydratase/isomerase family. In the central section; belongs to the 3-hydroxyacyl-CoA dehydrogenase family. As to quaternary structure, heterotetramer of two alpha chains (FadJ) and two beta chains (FadI).

It is found in the cytoplasm. The enzyme catalyses a (3S)-3-hydroxyacyl-CoA = a (2E)-enoyl-CoA + H2O. It carries out the reaction a 4-saturated-(3S)-3-hydroxyacyl-CoA = a (3E)-enoyl-CoA + H2O. The catalysed reaction is a (3S)-3-hydroxyacyl-CoA + NAD(+) = a 3-oxoacyl-CoA + NADH + H(+). It catalyses the reaction (3S)-3-hydroxybutanoyl-CoA = (3R)-3-hydroxybutanoyl-CoA. Its pathway is lipid metabolism; fatty acid beta-oxidation. Catalyzes the formation of a hydroxyacyl-CoA by addition of water on enoyl-CoA. Also exhibits 3-hydroxyacyl-CoA epimerase and 3-hydroxyacyl-CoA dehydrogenase activities. In Escherichia coli O8 (strain IAI1), this protein is Fatty acid oxidation complex subunit alpha.